A 711-amino-acid chain; its full sequence is MAQSSLVAAAGRSGRVIGDYAVGRQIGSGSFSVVWEGRHLVHGTVVAIKEIAMARLNKKLQESLMSEIIILRKINHPNIIRFIDMIEAPGKINLVLEYCKGGDLSMYIHKHGSVPEATAKHFMLQLAAGLQVLRDNNIIHRDLKPQNLLLSTDDNDAALKIADFGFARSLQPRGLAETLCGSPLYMAPEIMQLQKYDAKADLWSVGAILFQLVTGRTPFTGNSQIQLLQNIIRSTELHFPADCRDLSTDCKDLCQKLLRRNPVERLTFEEFFHHPFLSDKQSYDFTRSRLDSRTMNDFHSSGSSPSRNIEEISQEDGLPFFLDDDSSGPEGSPSSFKHTSPMKSSYGFSVERREAALSPLKNMDLSSRYSRVSHRAETNNFKFEGHRLSDRSQFKPSSLPDSRSFSTQGRGDSPDSMDQDYVLISGPPVDIPSSSSGSPKPFNYPFKSHSPPVEFIKRNVTNLTAPMPIASATGNNLSRFGSLESQNCIPGTSHGSLDLVDAFEQPSTNSLTRIRSLQKCAAAIAELVHERGENGKHLEAFSIQLVILAIWNQALHICHTQAVSGIEGSLLQDINRVGRNISHGGSEKLLPQIQKEFVQEVERAEELAKFVESDNAKMPDAMEMILQAALALGISGGVDEVMGDAENAGNLYSKAVRLLVFLAVEAQTLILNPPLTLTNSVRYRLRTYIDSLITRLKHLQSHRRTSYPQKQ.

Positions 20 to 277 constitute a Protein kinase domain; it reads YAVGRQIGSG…FEEFFHHPFL (258 aa). Residues 26 to 34 and Lys49 each bind ATP; that span reads IGSGSFSVV. Catalysis depends on Asp142, which acts as the Proton acceptor. Disordered regions lie at residues 318–342 and 383–419; these read LPFFLDDDSSGPEGSPSSFKHTSPM and FEGHRLSDRSQFKPSSLPDSRSFSTQGRGDSPDSMDQ. The span at 383 to 393 shows a compositional bias: basic and acidic residues; sequence FEGHRLSDRSQ. Residues 394-410 show a composition bias toward polar residues; that stretch reads FKPSSLPDSRSFSTQGR. The AIM (Atg8-family-interacting motif) signature appears at 421-424; it reads YVLI.

Belongs to the protein kinase superfamily. Ser/Thr protein kinase family.

The protein localises to the cytoplasmic vesicle. The protein resides in the autophagosome. In terms of biological role, serine/threonine protein kinase involved in autophagy. The ATG1-ATG13 protein kinase complex regulates downstream events required for autophagosome enclosure and/or vacuolar delivery. The polypeptide is Serine/threonine-protein kinase ATG1b (Arabidopsis thaliana (Mouse-ear cress)).